A 348-amino-acid chain; its full sequence is Holliday junction branch migration complex subunit RuvB (348 aa).

A large ATPase domain (RuvB-L) region spans residues 1–183 (MTDPSRLVTP…FGIPVRLNFY (183 aa)). ATP contacts are provided by residues Leu22, Arg23, Gly64, Lys67, Thr68, Thr69, 130–132 (EDF), Arg173, Tyr183, and Arg220. Residue Thr68 participates in Mg(2+) binding. Residues 184–254 (TIEELESIVS…IADHALGALE (71 aa)) form a small ATPAse domain (RuvB-S) region. Residues 257–348 (AAGLDAMDRR…FGLFGGEEEA (92 aa)) are head domain (RuvB-H). Residues Arg293, Arg312, and Arg317 each contribute to the DNA site.

This sequence belongs to the RuvB family. Homohexamer. Forms an RuvA(8)-RuvB(12)-Holliday junction (HJ) complex. HJ DNA is sandwiched between 2 RuvA tetramers; dsDNA enters through RuvA and exits via RuvB. An RuvB hexamer assembles on each DNA strand where it exits the tetramer. Each RuvB hexamer is contacted by two RuvA subunits (via domain III) on 2 adjacent RuvB subunits; this complex drives branch migration. In the full resolvosome a probable DNA-RuvA(4)-RuvB(12)-RuvC(2) complex forms which resolves the HJ.

The protein resides in the cytoplasm. It catalyses the reaction ATP + H2O = ADP + phosphate + H(+). In terms of biological role, the RuvA-RuvB-RuvC complex processes Holliday junction (HJ) DNA during genetic recombination and DNA repair, while the RuvA-RuvB complex plays an important role in the rescue of blocked DNA replication forks via replication fork reversal (RFR). RuvA specifically binds to HJ cruciform DNA, conferring on it an open structure. The RuvB hexamer acts as an ATP-dependent pump, pulling dsDNA into and through the RuvAB complex. RuvB forms 2 homohexamers on either side of HJ DNA bound by 1 or 2 RuvA tetramers; 4 subunits per hexamer contact DNA at a time. Coordinated motions by a converter formed by DNA-disengaged RuvB subunits stimulates ATP hydrolysis and nucleotide exchange. Immobilization of the converter enables RuvB to convert the ATP-contained energy into a lever motion, pulling 2 nucleotides of DNA out of the RuvA tetramer per ATP hydrolyzed, thus driving DNA branch migration. The RuvB motors rotate together with the DNA substrate, which together with the progressing nucleotide cycle form the mechanistic basis for DNA recombination by continuous HJ branch migration. Branch migration allows RuvC to scan DNA until it finds its consensus sequence, where it cleaves and resolves cruciform DNA. The polypeptide is Holliday junction branch migration complex subunit RuvB (Rhodopseudomonas palustris (strain HaA2)).